Consider the following 466-residue polypeptide: Vimentin (466 aa).

Composition is skewed to low complexity over residues 1–13 (MSTR…SYRR) and 20–31 (TASRPSSSRSYV). The disordered stretch occupies residues 1 to 31 (MSTRTVSSSSYRRMFGGPGTASRPSSSRSYV). An N-acetylserine modification is found at Ser-2. Positions 2 to 95 (STRTVSSSSY…FSLADAINTE (94 aa)) are head. Ser-7 bears the Phosphoserine; alternate mark. Ser-7 carries O-linked (GlcNAc) serine; alternate glycosylation. A phosphoserine mark is found at Ser-8, Ser-9, and Ser-10. Thr-20 is modified (phosphothreonine). Residues Ser-25 and Ser-26 each carry the phosphoserine modification. Thr-33 carries O-linked (GlcNAc) threonine glycosylation. Ser-34 carries O-linked (GlcNAc) serine; alternate glycosylation. The residue at position 34 (Ser-34) is a Phosphoserine; by PKC; alternate. Ser-39 bears the Phosphoserine; by CaMK2, PKA, PKC and ROCK2 mark. 4 positions are modified to phosphoserine: Ser-42, Ser-47, Ser-49, and Ser-51. The residue at position 53 (Tyr-53) is a Phosphotyrosine. A Phosphoserine modification is found at Ser-55. Ser-56 carries the phosphoserine; by CDK5 and CDK1 modification. Residue Tyr-61 is modified to Phosphotyrosine. Position 66 is a phosphoserine (Ser-66). Residue Ser-72 is modified to Phosphoserine; by AURKB and ROCK2. 2 positions are modified to phosphoserine: Ser-73 and Ser-87. Positions 96–131 (FKNTRTNEKVELQELNDRFANYIDKVRFLEQQNKIL) are coil 1A. The stretch at 96–131 (FKNTRTNEKVELQELNDRFANYIDKVRFLEQQNKIL) forms a coiled coil. One can recognise an IF rod domain in the interval 103–411 (EKVELQELND…KLLEGEESRI (309 aa)). Lys-104 participates in a covalent cross-link: Glycyl lysine isopeptide (Lys-Gly) (interchain with G-Cter in SUMO2). Tyr-117 is subject to Phosphotyrosine. Residues Lys-120, Lys-129, and Lys-139 each carry the N6-acetyllysine; alternate modification. Residues Lys-120 and Lys-129 each carry the N6-succinyllysine; alternate modification. Glycyl lysine isopeptide (Lys-Gly) (interchain with G-Cter in SUMO2); alternate cross-links involve residues Lys-120, Lys-129, and Lys-139. The interval 132–153 (LAELEQLKGQGKSRLGDLYEEE) is linker 1. Position 144 is a phosphoserine (Ser-144). Positions 154–245 (MRELRRQVDQ…KLHDEEIQEL (92 aa)) form a coiled coil. Residues 154 to 245 (MRELRRQVDQ…KLHDEEIQEL (92 aa)) form a coil 1B region. At Lys-168 the chain carries N6-acetyllysine. Lys-188 carries the N6-acetyllysine; alternate modification. Lys-188 carries the N6-succinyllysine; alternate modification. Ser-214 carries the phosphoserine modification. Lys-223 is subject to N6-acetyllysine; alternate. Lys-223 participates in a covalent cross-link: Glycyl lysine isopeptide (Lys-Gly) (interchain with G-Cter in SUMO2); alternate. Residue Ser-226 is modified to Phosphoserine. Residue Lys-235 is modified to N6-acetyllysine. A linker 12 region spans residues 246 to 268 (QAQIQEQHVQIDMDVSKPDLTAA). Residue Lys-262 forms a Glycyl lysine isopeptide (Lys-Gly) (interchain with G-Cter in SUMO2) linkage. The interval 269-407 (LRDVRQQYES…ATYRKLLEGE (139 aa)) is coil 2. Lys-294 is subject to N6-acetyllysine; alternate. Position 294 is an N6-succinyllysine; alternate (Lys-294). Residue Lys-294 forms a Glycyl lysine isopeptide (Lys-Gly) (interchain with G-Cter in SUMO2); alternate linkage. Ser-299 is modified (phosphoserine). A coiled-coil region spans residues 303 to 407 (NRNNDALRQA…ATYRKLLEGE (105 aa)). Lys-313 participates in a covalent cross-link: Glycyl lysine isopeptide (Lys-Gly) (interchain with G-Cter in SUMO2). Ser-325 carries the phosphoserine modification. A [IL]-x-C-x-x-[DE] motif motif is present at residues 326–329 (LTCE). N6-acetyllysine; alternate is present on Lys-373. A Glycyl lysine isopeptide (Lys-Gly) (interchain with G-Cter in SUMO2); alternate cross-link involves residue Lys-373. The segment at 408–466 (ESRISLPLPNFSSLNLRETNLESLPLVDTHSKRTLLIKTVETRDGQVINETSQHHDDLE) is tail. Phosphoserine occurs at positions 409, 412, 419, and 420. Residue Thr-426 is modified to Phosphothreonine. At Ser-430 the chain carries Phosphoserine. Phosphothreonine is present on Thr-436. Ser-438 is subject to Phosphoserine. A Glycyl lysine isopeptide (Lys-Gly) (interchain with G-Cter in SUMO2) cross-link involves residue Lys-439. The residue at position 445 (Lys-445) is an N6-acetyllysine; alternate. Lys-445 carries the N6-succinyllysine; alternate modification. Residue Lys-445 forms a Glycyl lysine isopeptide (Lys-Gly) (interchain with G-Cter in SUMO2); alternate linkage. Lys-445 participates in a covalent cross-link: Glycyl lysine isopeptide (Lys-Gly) (interchain with G-Cter in SUMO1); alternate. Thr-446 and Thr-458 each carry phosphothreonine. Ser-459 is subject to Phosphoserine.

Belongs to the intermediate filament family. In terms of assembly, homomer assembled from elementary dimers. Identified in complexes that contain VIM, EZR, AHNAK, BFSP1, BFSP2, ANK2, PLEC, PRX and spectrin. Interacts with BCAS3. Interacts with LGSN. Interacts with SYNM. Interacts (via rod region) with PLEC (via CH 1 domain). Interacts with STK33. Interacts with LARP6. Interacts with RAB8B. Interacts with TOR1A; the interaction associates TOR1A with the cytoskeleton. Interacts with TOR1AIP1. Interacts with TOR1AIP1. Interacts with DIAPH1. Interacts with EPPK1; interaction is dependent of higher-order structure of intermediate filament. Interacts with the non-receptor tyrosine kinase SRMS; the interaction leads to phosphorylation of VIM. Interacts with NOD2. Interacts (via head region) with CORO1C. Interacts with HDGF. Interacts with PRKCE (via phorbol-ester/DAG-type 2 domain). Interacts with BFSP2. Interacts with PPL. Interacts with PKP1 and PKP2. Interacts with SCRIB (via PDZ domains); the interaction protects SCRIB from proteasomal degradation and facilitates SCRIB localization to intermediate filaments, the interaction is reduced by cell contact inhibition. Post-translationally, one of the most prominent phosphoproteins in various cells of mesenchymal origin. Phosphorylation is enhanced during cell division, at which time vimentin filaments are significantly reorganized. Phosphorylation by PKN1 inhibits the formation of filaments. Filament disassembly during mitosis is promoted by phosphorylation at Ser-55 as well as by nestin. Phosphorylated at Ser-56 by CDK5 during neutrophil secretion in the cytoplasm. Phosphorylated by STK33. Phosphorylated on tyrosine residues by SRMS. S-nitrosylation is induced by interferon-gamma and oxidatively-modified low-densitity lipoprotein (LDL(ox)) possibly implicating the iNOS-S100A8/9 transnitrosylase complex.

The protein localises to the cytoplasm. It localises to the cytoskeleton. Its subcellular location is the nucleus matrix. It is found in the cell membrane. Functionally, vimentins are class-III intermediate filaments found in various non-epithelial cells, especially mesenchymal cells. Vimentin is attached to the nucleus, endoplasmic reticulum, and mitochondria, either laterally or terminally. Plays a role in cell directional movement, orientation, cell sheet organization and Golgi complex polarization at the cell migration front. Protects SCRIB from proteasomal degradation and facilitates its localization to intermediate filaments in a cell contact-mediated manner. Involved with LARP6 in the stabilization of type I collagen mRNAs for CO1A1 and CO1A2. This Sus scrofa (Pig) protein is Vimentin (VIM).